The sequence spans 77 residues: Translational regulator CsrA (77 aa).

The protein belongs to the CsrA/RsmA family. In terms of assembly, homodimer; the beta-strands of each monomer intercalate to form a hydrophobic core, while the alpha-helices form wings that extend away from the core.

The protein localises to the cytoplasm. Its function is as follows. A translational regulator that binds mRNA to regulate translation initiation and/or mRNA stability. Usually binds in the 5'-UTR at or near the Shine-Dalgarno sequence preventing ribosome-binding, thus repressing translation. Its main target seems to be the major flagellin gene, while its function is anatagonized by FliW. The sequence is that of Translational regulator CsrA from Desulfitobacterium hafniense (strain Y51).